A 677-amino-acid polypeptide reads, in one-letter code: Methionine--tRNA ligase (677 aa).

The short motif at 15–25 (PYANGSIHLGH) is the 'HIGH' region element. 4 residues coordinate Zn(2+): C146, C149, C159, and C162. Residues 333-337 (KMSKS) carry the 'KMSKS' region motif. Residue K336 coordinates ATP. The tRNA-binding domain maps to 575 to 677 (DFAKIDLRVA…DGAKPGQQVK (103 aa)).

This sequence belongs to the class-I aminoacyl-tRNA synthetase family. MetG type 1 subfamily. As to quaternary structure, homodimer. Requires Zn(2+) as cofactor.

It is found in the cytoplasm. It catalyses the reaction tRNA(Met) + L-methionine + ATP = L-methionyl-tRNA(Met) + AMP + diphosphate. Is required not only for elongation of protein synthesis but also for the initiation of all mRNA translation through initiator tRNA(fMet) aminoacylation. The protein is Methionine--tRNA ligase of Salmonella typhimurium (strain LT2 / SGSC1412 / ATCC 700720).